The primary structure comprises 656 residues: MGCCSSASAAQSSKREWKPLEDRSCTDIPWLLLFVLFCIGMGFICGFSVATGAAARLVSGYDSYGNICGQRNAKLEAIANSGLDHTHRKYVFFLDPCNLDLINRKIKSMALCVAACPRQELKTLSDVQKFAEINGSALCSYNIKPSEYTLTAKSSAFCPKLPVPASAPIPFFHRCAPVNISCYAKFAEALITFVSDNSVLHRLISGVMTSKEIILGLCLLSLVLSMILMVIIRYISRVLVWILTILVILGSLGGTGVLWWLYAKQRRSPKETVIPEQLQIAEDNLRALLIYAISATVFTVILFLIMLVMRKRVALTIALFHVAGKVFIHLPLLVFQPFWTFFALVLFWAYWIMTLLFLGTTGSAVQNEQGFVEYKISGPLQYMWWYHVVGLIWISEFILACQQMTVAGAVVTYYFTRDKRNLPFTPILASVNRLIRYHLGTVAKGSFIITLVKIPRMILMYIHSQLKGKENACARCMLKSCICCLWCLEKCLSYLNQNAYTATAINSTNFCTSAKDAFVILVENALRVAAINTVGDFMLFLGKVLIVCSTGLAGIMLLNYQQDYTVWVLPLIIVCLFAFLVAHCFLSIYEMVVDVLFLCFAIDTKYNDGSPGREFYMDKVLMEFVENSRKAMKEAGKGGAADARKLKPMASGASSA.

Gly-2 carries the N-myristoyl glycine lipid modification. The Cytoplasmic segment spans residues Gly-2–Pro-29. Residues Trp-30 to Ala-50 form a helical membrane-spanning segment. At Thr-51–Lys-211 the chain is on the extracellular side. Asn-134 and Asn-179 each carry an N-linked (GlcNAc...) asparagine glycan. A helical membrane pass occupies residues Glu-212–Ile-232. At Arg-233–Arg-237 the chain is on the cytoplasmic side. Residues Val-238–Leu-258 form a helical membrane-spanning segment. Topologically, residues Trp-259–Ala-287 are extracellular. Residues Leu-288–Val-308 traverse the membrane as a helical segment. Topologically, residues Met-309–Ala-314 are cytoplasmic. Residues Leu-315–Phe-335 form a helical membrane-spanning segment. Topologically, residues Gln-336–Pro-337 are extracellular. Residues Phe-338–Leu-358 form a helical membrane-spanning segment. Residues Gly-359 to Pro-379 are Cytoplasmic-facing. The chain crosses the membrane as a helical span at residues Leu-380–Ala-400. At Cys-401–Thr-441 the chain is on the extracellular side. The chain crosses the membrane as a helical span at residues Val-442 to Ile-462. The Cytoplasmic segment spans residues His-463 to Asp-536. Residues Phe-537–Leu-557 traverse the membrane as a helical segment. Residues Leu-558–Thr-565 lie on the Extracellular side of the membrane. The helical transmembrane segment at Val-566–Leu-586 threads the bilayer. At Ser-587 to Ala-656 the chain is on the cytoplasmic side. Positions Ala-635–Ala-656 are disordered. At Ser-651 the chain carries Phosphoserine.

The protein belongs to the CTL (choline transporter-like) family. Expressed in neurons, oligodendrocytes and astrocytes. Also expressed in the mucosal cell layer of the colon. In the developing brain, isoform 1 is expressed in both neurons and oligodendroglial cells, whereas isoform 2 is restricted to oligodendroglial cells.

The protein resides in the cell membrane. The protein localises to the mitochondrion outer membrane. The enzyme catalyses choline(out) + n H(+)(in) = choline(in) + n H(+)(out). It catalyses the reaction ethanolamine(out) + n H(+)(in) = ethanolamine(in) + n H(+)(out). Functionally, choline transporter, acts as a choline/H+ antiporter. Also acts as a high-affinity ethanolamine/H+ antiporter, regulating the supply of extracellular ethanolamine (Etn) for the CDP-Etn pathway, redistribute intracellular Etn and balance the CDP-Cho and CDP-Etn arms of the Kennedy pathway. Involved in membrane synthesis and myelin production. The chain is Choline transporter-like protein 1 (Slc44a1) from Rattus norvegicus (Rat).